Consider the following 285-residue polypeptide: MLYLTKISNAGSEFTENEQKIADFLQANVSELQSVSSRQMAKQLGISQSSIVKFAQKLGAQGFTELRMALIGEYSASREKTNATALHLHSSITSDDSLEVIARKLNREKELALEQTCALFDYARLQKIIEVISKAPFIQITGLGGSALVGRDLSFKLMKIGYRVACEADTHVQATVSQALKKGDVQIAISYSGSKKEIVLCAEAARKQGATVIAITSLADSPLRRLAHFTLDTVSGETEWRSSSMSTRTAQNSVTDLLFVGLVQLNDVESLKMIQRSSELTQRLK.

The HTH rpiR-type domain occupies 1–77; it reads MLYLTKISNA…MALIGEYSAS (77 aa). The segment at residues 37–56 is a DNA-binding region (H-T-H motif); that stretch reads SRQMAKQLGISQSSIVKFAQ. Positions 128-268 constitute an SIS domain; it reads IIEVISKAPF…FVGLVQLNDV (141 aa).

As to quaternary structure, homotetramer.

It participates in amino-sugar metabolism; N-acetylmuramate degradation [regulation]. Represses the expression of the murPQ operon involved in the uptake and degradation of N-acetylmuramic acid (MurNAc). Binds to two adjacent inverted repeats within the operator region. MurNAc 6-phosphate, the substrate of MurQ, is the specific inducer that weakens binding of MurR to the operator. The polypeptide is HTH-type transcriptional regulator MurR (Escherichia coli O139:H28 (strain E24377A / ETEC)).